Here is a 446-residue protein sequence, read N- to C-terminus: Transcription factor SOX-8 (446 aa).

Disordered regions lie at residues 1-58 (MLDM…DPAE), 155-259 (AERL…RQNI), and 318-378 (HKSA…PFAG). Residues 40–53 (EGLGRAGVAVGGAR) show a composition bias toward gly residues. The dimerization (DIM) stretch occupies residues 58 to 100 (EAADERFPACIRDAVSQVLKGYDWSLVPMPVRGGGGGALKAKP). A DNA-binding region (HMG box) is located at residues 102 to 170 (VKRPMNAFMV…QHKKDHPDYK (69 aa)). Composition is skewed to basic and acidic residues over residues 155 to 171 (AERL…DYKY), 210 to 219 (DGHHHGDHTG), and 242 to 253 (PELKLEGRRPVD). The tract at residues 224–298 (PPTPPTTPKT…LPLGGPAPPE (75 aa)) is transactivation domain (TAM). Residues 335–446 (RPHIKTEQPS…QPVYTTLTRP (112 aa)) form a transactivation domain (TAC) region. Residues 362 to 378 (SGQSSATPAAPAGPFAG) are compositionally biased toward low complexity. The short motif at 400-408 (PGLYQYPCF) is the 9aaTAD element. A disordered region spans residues 425-446 (LPPAHSPTSHWDQPVYTTLTRP). A compositionally biased stretch (polar residues) spans 430 to 446 (SPTSHWDQPVYTTLTRP).

The protein localises to the nucleus. Its function is as follows. Transcription factor that may play a role in central nervous system, limb and facial development. May be involved in male sex determination. Binds the consensus motif 5'-[AT][AT]CAA[AT]G-3'. The chain is Transcription factor SOX-8 from Homo sapiens (Human).